The chain runs to 327 residues: Aspartate--ammonia ligase (327 aa).

This sequence belongs to the class-II aminoacyl-tRNA synthetase family. AsnA subfamily.

It is found in the cytoplasm. It carries out the reaction L-aspartate + NH4(+) + ATP = L-asparagine + AMP + diphosphate + H(+). Its pathway is amino-acid biosynthesis; L-asparagine biosynthesis; L-asparagine from L-aspartate (ammonia route): step 1/1. This Bacillus mycoides (strain KBAB4) (Bacillus weihenstephanensis) protein is Aspartate--ammonia ligase.